The sequence spans 195 residues: MAHGPRYRVPFRRRREGKTVYRKRLKLLLSGKPRLVVRRFNSNILAQLVEYDPKGDRVIFTIHSNVLKKYGWKGHRGNLPSAYLVGLIAGYEALKRGYKEAVLDIGRYKSTKGNALYAVLKGALDAGLNIPHSETILPSEDRIRGEHIANYAKMLKENEELYKKQFSRYLKEGLDPEQLPNHFEEVKQKIISQYQ.

It belongs to the universal ribosomal protein uL18 family. In terms of assembly, part of the 50S ribosomal subunit. Contacts the 5S and 23S rRNAs.

Functionally, this is one of the proteins that bind and probably mediate the attachment of the 5S RNA into the large ribosomal subunit, where it forms part of the central protuberance. The chain is Large ribosomal subunit protein uL18 from Nanoarchaeum equitans (strain Kin4-M).